Here is a 303-residue protein sequence, read N- to C-terminus: Aspartate carbamoyltransferase catalytic subunit (303 aa).

Positions 48 and 49 each coordinate carbamoyl phosphate. Residue lysine 76 coordinates L-aspartate. Carbamoyl phosphate contacts are provided by arginine 98, histidine 129, and glutamine 132. Arginine 162 and arginine 214 together coordinate L-aspartate. Positions 257 and 258 each coordinate carbamoyl phosphate.

It belongs to the aspartate/ornithine carbamoyltransferase superfamily. ATCase family. As to quaternary structure, heterododecamer (2C3:3R2) of six catalytic PyrB chains organized as two trimers (C3), and six regulatory PyrI chains organized as three dimers (R2).

The enzyme catalyses carbamoyl phosphate + L-aspartate = N-carbamoyl-L-aspartate + phosphate + H(+). It functions in the pathway pyrimidine metabolism; UMP biosynthesis via de novo pathway; (S)-dihydroorotate from bicarbonate: step 2/3. In terms of biological role, catalyzes the condensation of carbamoyl phosphate and aspartate to form carbamoyl aspartate and inorganic phosphate, the committed step in the de novo pyrimidine nucleotide biosynthesis pathway. The sequence is that of Aspartate carbamoyltransferase catalytic subunit from Leuconostoc citreum (strain KM20).